A 281-amino-acid polypeptide reads, in one-letter code: Undecaprenyl-diphosphatase (281 aa).

8 helical membrane-spanning segments follow: residues 2 to 22, 46 to 66, 93 to 113, 115 to 135, 152 to 172, 190 to 210, 228 to 248, and 259 to 279; these read FDLI…FLPV, AFSS…VIQL, VIVG…FMDA, LMNF…FIVI, ITFK…VPGT, FVAA…VTFL, IVML…IKFM, and VFGY…ILGI.

Belongs to the UppP family.

It localises to the cell membrane. The catalysed reaction is di-trans,octa-cis-undecaprenyl diphosphate + H2O = di-trans,octa-cis-undecaprenyl phosphate + phosphate + H(+). Functionally, catalyzes the dephosphorylation of undecaprenyl diphosphate (UPP). Confers resistance to bacitracin. This Leuconostoc mesenteroides subsp. mesenteroides (strain ATCC 8293 / DSM 20343 / BCRC 11652 / CCM 1803 / JCM 6124 / NCDO 523 / NBRC 100496 / NCIMB 8023 / NCTC 12954 / NRRL B-1118 / 37Y) protein is Undecaprenyl-diphosphatase.